The following is a 265-amino-acid chain: Apolipoprotein A-I (265 aa).

The signal sequence occupies residues 1 to 18 (MKAVVLTLAVLFLTGSQA). 2 consecutive repeat copies span residues 67-88 (LKLL…EQLG) and 89-110 (PVTR…QEMN). The segment at 67 to 265 (LKLLDNWDSL…DEASKKLNAQ (199 aa)) is 10 X approximate tandem repeats. The residue at position 109 (Met-109) is a Methionine sulfoxide. A 3; half-length repeat occupies 111–121 (KDLQEVKQKVQ). Tandem repeats lie at residues 122 to 142 (PYLD…RQKV), 144 to 165 (PLGE…DKLT), 166 to 187 (PLAE…QQLA), 188 to 209 (PYSD…EGGG), and 210 to 230 (SLVQ…EKAK). One copy of the 9; half-length repeat lies at 231–241 (PALEDLRQGLL). The stretch at 242–265 (PVLENLKVSILAAIDEASKKLNAQ) is repeat 10.

It belongs to the apolipoprotein A1/A4/E family. In terms of assembly, homodimer. Interacts with APOA1BP and CLU. Component of a sperm activating protein complex (SPAP), consisting of APOA1, an immunoglobulin heavy chain, an immunoglobulin light chain and albumin. Interacts with NDRG1. Interacts with SCGB3A2. Interacts with NAXE and YJEFN3. Post-translationally, glycosylated. Palmitoylated. In terms of processing, phosphorylation sites are present in the extracellular medium. In terms of tissue distribution, major protein of plasma HDL, also found in chylomicrons.

The protein localises to the secreted. In terms of biological role, participates in the reverse transport of cholesterol from tissues to the liver for excretion by promoting cholesterol efflux from tissues and by acting as a cofactor for the lecithin cholesterol acyltransferase (LCAT). As part of the SPAP complex, activates spermatozoa motility. This is Apolipoprotein A-I (APOA1) from Balaenoptera acutorostrata scammoni (North Pacific minke whale).